A 130-amino-acid chain; its full sequence is Sec-independent protein translocase protein TatB (130 aa).

A helical transmembrane segment spans residues 1–21; sequence MFDIGFTELTLIFIIGLVVLG. Composition is skewed to basic and acidic residues over residues 57–67 and 111–130; these read QDMQERMEKQM and PSDKDSADKNNHDQDSRRHD. Residues 57-130 are disordered; sequence QDMQERMEKQ…NHDQDSRRHD (74 aa).

It belongs to the TatB family. In terms of assembly, the Tat system comprises two distinct complexes: a TatABC complex, containing multiple copies of TatA, TatB and TatC subunits, and a separate TatA complex, containing only TatA subunits. Substrates initially bind to the TatABC complex, which probably triggers association of the separate TatA complex to form the active translocon.

Its subcellular location is the cell inner membrane. Its function is as follows. Part of the twin-arginine translocation (Tat) system that transports large folded proteins containing a characteristic twin-arginine motif in their signal peptide across membranes. Together with TatC, TatB is part of a receptor directly interacting with Tat signal peptides. TatB may form an oligomeric binding site that transiently accommodates folded Tat precursor proteins before their translocation. The chain is Sec-independent protein translocase protein TatB from Alcanivorax borkumensis (strain ATCC 700651 / DSM 11573 / NCIMB 13689 / SK2).